Consider the following 345-residue polypeptide: Tubulin-folding cofactor C (345 aa).

N-acetylmethionine is present on M1. A compositionally biased stretch (polar residues) spans 1-10; the sequence is MEDDGQSSVA. Residues 1 to 83 form a disordered region; it reads MEDDGQSSVA…SRLASSSTDS (83 aa). Residues 23–39 show a composition bias toward basic and acidic residues; that stretch reads DMLERLSARHQARKSDS. A compositionally biased stretch (low complexity) spans 40-55; it reads PDSSSSSSSTLESTSS. Positions 61 to 73 are enriched in basic and acidic residues; the sequence is SDSKRSIESRIAE. A compositionally biased stretch (low complexity) spans 74 to 83; sequence SRLASSSTDS. A C-CAP/cofactor C-like domain is found at 169–318; it reads PPKLVPVRDS…NWANVDDFRW (150 aa).

The protein belongs to the TBCC family. Supercomplex made of cofactors A to E. Cofactors A and D function by capturing and stabilizing tubulin in a quasi-native conformation. Cofactor E binds to the cofactor D-tubulin complex; interaction with cofactor C then causes the release of tubulin polypeptides that are committed to the native state. Ubiquitously expressed (at protein level). Present in leaves, roots, flowers, and stems.

It is found in the cytoplasm. Essential tubulin-folding protein involved in the final step of the tubulin folding pathway. Required for continuous microtubule cytoskeleton organization, mitotic division, cytokinesis, and to couple cell cycle progression to cell division in embryos and endosperms. Not essential for cell viability. Binds probably to the multimeric supercomplex, stimulating GTP hydrolysis by the bound beta-tubulin and the release of the alpha-/beta-tubulin heterodimer. The sequence is that of Tubulin-folding cofactor C (TFCC) from Arabidopsis thaliana (Mouse-ear cress).